We begin with the raw amino-acid sequence, 76 residues long: Small ribosomal subunit protein uS17 (76 aa).

It belongs to the universal ribosomal protein uS17 family. In terms of assembly, part of the 30S ribosomal subunit.

One of the primary rRNA binding proteins, it binds specifically to the 5'-end of 16S ribosomal RNA. This chain is Small ribosomal subunit protein uS17, found in Anaplasma phagocytophilum (strain HZ).